The following is a 610-amino-acid chain: tRNA uridine 5-carboxymethylaminomethyl modification enzyme MnmG (610 aa).

14–19 (GAGHAG) is a binding site for FAD. 274 to 288 (GPRYCPSIEDKIVKF) contacts NAD(+).

The protein belongs to the MnmG family. As to quaternary structure, homodimer. Heterotetramer of two MnmE and two MnmG subunits. The cofactor is FAD.

It is found in the cytoplasm. Functionally, NAD-binding protein involved in the addition of a carboxymethylaminomethyl (cmnm) group at the wobble position (U34) of certain tRNAs, forming tRNA-cmnm(5)s(2)U34. The chain is tRNA uridine 5-carboxymethylaminomethyl modification enzyme MnmG from Chlamydia trachomatis serovar A (strain ATCC VR-571B / DSM 19440 / HAR-13).